Reading from the N-terminus, the 170-residue chain is Opacity-related protein POPM3 (170 aa).

This sequence belongs to the opacity porin family.

The protein localises to the cell outer membrane. In Neisseria meningitidis serogroup C, this protein is Opacity-related protein POPM3 (opr).